The primary structure comprises 158 residues: Glutathione peroxidase homolog BsaA (158 aa).

Residue cysteine 36 is part of the active site.

It belongs to the glutathione peroxidase family.

This Staphylococcus aureus (strain COL) protein is Glutathione peroxidase homolog BsaA (bsaA).